Consider the following 186-residue polypeptide: ATP synthase subunit delta (186 aa).

The protein belongs to the ATPase delta chain family. In terms of assembly, F-type ATPases have 2 components, F(1) - the catalytic core - and F(0) - the membrane proton channel. F(1) has five subunits: alpha(3), beta(3), gamma(1), delta(1), epsilon(1). F(0) has three main subunits: a(1), b(2) and c(10-14). The alpha and beta chains form an alternating ring which encloses part of the gamma chain. F(1) is attached to F(0) by a central stalk formed by the gamma and epsilon chains, while a peripheral stalk is formed by the delta and b chains.

Its subcellular location is the cell inner membrane. F(1)F(0) ATP synthase produces ATP from ADP in the presence of a proton or sodium gradient. F-type ATPases consist of two structural domains, F(1) containing the extramembraneous catalytic core and F(0) containing the membrane proton channel, linked together by a central stalk and a peripheral stalk. During catalysis, ATP synthesis in the catalytic domain of F(1) is coupled via a rotary mechanism of the central stalk subunits to proton translocation. Its function is as follows. This protein is part of the stalk that links CF(0) to CF(1). It either transmits conformational changes from CF(0) to CF(1) or is implicated in proton conduction. The sequence is that of ATP synthase subunit delta from Brucella anthropi (strain ATCC 49188 / DSM 6882 / CCUG 24695 / JCM 21032 / LMG 3331 / NBRC 15819 / NCTC 12168 / Alc 37) (Ochrobactrum anthropi).